We begin with the raw amino-acid sequence, 212 residues long: Large ribosomal subunit protein uL1 (212 aa).

Belongs to the universal ribosomal protein uL1 family. In terms of assembly, part of the 50S ribosomal subunit.

Its function is as follows. Binds directly to 23S rRNA. Probably involved in E site tRNA release. In terms of biological role, protein L1 is also a translational repressor protein, it controls the translation of its operon by binding to its mRNA. The protein is Large ribosomal subunit protein uL1 of Methanobrevibacter smithii (strain ATCC 35061 / DSM 861 / OCM 144 / PS).